Here is an 816-residue protein sequence, read N- to C-terminus: Stemod-13(17)-ene synthase (816 aa).

The segment covering 1 to 10 (MMLLSSSYSG) has biased composition (polar residues). The tract at residues 1-24 (MMLLSSSYSGGQFPGVSPLGTRPK) is disordered. Mg(2+) contacts are provided by aspartate 553, aspartate 557, asparagine 698, threonine 702, and glutamate 706. The DDXXD motif motif lies at 553–557 (DDFFD).

Belongs to the terpene synthase family. Mg(2+) is required as a cofactor.

The catalysed reaction is 9alpha-copalyl diphosphate = stemod-13(17)-ene + diphosphate. Functionally, catalyzes the conversion of syn-copalyl diphosphate to stemodene. This Oryza sativa subsp. indica (Rice) protein is Stemod-13(17)-ene synthase (KSL11).